We begin with the raw amino-acid sequence, 161 residues long: Large ribosomal subunit protein bL17 (161 aa).

The tract at residues 126 to 161 is disordered; the sequence is KVAKKATRTRRSKKTTEAAPAAEVPATEEPKAESAE. Basic residues predominate over residues 129 to 138; it reads KKATRTRRSK. A compositionally biased stretch (low complexity) spans 142–152; sequence EAAPAAEVPAT.

Belongs to the bacterial ribosomal protein bL17 family. Part of the 50S ribosomal subunit. Contacts protein L32.

In Bacteroides fragilis (strain ATCC 25285 / DSM 2151 / CCUG 4856 / JCM 11019 / LMG 10263 / NCTC 9343 / Onslow / VPI 2553 / EN-2), this protein is Large ribosomal subunit protein bL17.